The chain runs to 308 residues: Probable manganese-dependent inorganic pyrophosphatase (308 aa).

Residues H9, D13, D15, D75, H97, and D149 each coordinate Mn(2+).

The protein belongs to the PPase class C family. The cofactor is Mn(2+).

It is found in the cytoplasm. It carries out the reaction diphosphate + H2O = 2 phosphate + H(+). The chain is Probable manganese-dependent inorganic pyrophosphatase from Listeria welshimeri serovar 6b (strain ATCC 35897 / DSM 20650 / CCUG 15529 / CIP 8149 / NCTC 11857 / SLCC 5334 / V8).